A 221-amino-acid chain; its full sequence is Uracil-DNA glycosylase 1 (221 aa).

Aspartate 61 functions as the Proton acceptor in the catalytic mechanism.

Belongs to the uracil-DNA glycosylase (UDG) superfamily. UNG family.

The protein localises to the cytoplasm. It catalyses the reaction Hydrolyzes single-stranded DNA or mismatched double-stranded DNA and polynucleotides, releasing free uracil.. In terms of biological role, excises uracil residues from the DNA which can arise as a result of misincorporation of dUMP residues by DNA polymerase or due to deamination of cytosine. The sequence is that of Uracil-DNA glycosylase 1 from Listeria monocytogenes serotype 4b (strain F2365).